Here is a 259-residue protein sequence, read N- to C-terminus: 5'-nucleotidase SurE (259 aa).

D8, D9, S40, and N92 together coordinate a divalent metal cation.

It belongs to the SurE nucleotidase family. A divalent metal cation is required as a cofactor.

It is found in the cytoplasm. The enzyme catalyses a ribonucleoside 5'-phosphate + H2O = a ribonucleoside + phosphate. Its function is as follows. Nucleotidase that shows phosphatase activity on nucleoside 5'-monophosphates. This chain is 5'-nucleotidase SurE, found in Stenotrophomonas maltophilia (strain R551-3).